A 154-amino-acid chain; its full sequence is Xanthine-guanine phosphoribosyltransferase (154 aa).

Residues R37–G38, R69, and E88–T96 contribute to the 5-phospho-alpha-D-ribose 1-diphosphate site. GMP is bound at residue R69. D89 is a Mg(2+) binding site. Residues D92 and I135 each coordinate guanine. The xanthine site is built by D92 and I135. Residues D92–T96 and W134–I135 contribute to the GMP site.

The protein belongs to the purine/pyrimidine phosphoribosyltransferase family. XGPT subfamily. Homotetramer. The cofactor is Mg(2+).

It is found in the cell inner membrane. It carries out the reaction GMP + diphosphate = guanine + 5-phospho-alpha-D-ribose 1-diphosphate. It catalyses the reaction XMP + diphosphate = xanthine + 5-phospho-alpha-D-ribose 1-diphosphate. The catalysed reaction is IMP + diphosphate = hypoxanthine + 5-phospho-alpha-D-ribose 1-diphosphate. The protein operates within purine metabolism; GMP biosynthesis via salvage pathway; GMP from guanine: step 1/1. Its pathway is purine metabolism; XMP biosynthesis via salvage pathway; XMP from xanthine: step 1/1. In terms of biological role, purine salvage pathway enzyme that catalyzes the transfer of the ribosyl-5-phosphate group from 5-phospho-alpha-D-ribose 1-diphosphate (PRPP) to the N9 position of the 6-oxopurines guanine and xanthine to form the corresponding ribonucleotides GMP (guanosine 5'-monophosphate) and XMP (xanthosine 5'-monophosphate), with the release of PPi. To a lesser extent, also acts on hypoxanthine. The polypeptide is Xanthine-guanine phosphoribosyltransferase (Vibrio campbellii (strain ATCC BAA-1116)).